The following is a 227-amino-acid chain: Phosphatidylethanolamine-binding protein 4 (227 aa).

Positions 1–22 are cleaved as a signal peptide; the sequence is MGWTMRLVTAALLLGLMMVVTG. N-linked (GlcNAc...) (complex) asparagine glycosylation is present at asparagine 169. The tract at residues 188–227 is important for secretion; the sequence is EPEASTQFMTQNYQDSPTLQAPRERASEPKHKNQAEIAAC. The tract at residues 202 to 227 is disordered; it reads DSPTLQAPRERASEPKHKNQAEIAAC. Positions 209–221 are enriched in basic and acidic residues; sequence PRERASEPKHKNQ.

The protein belongs to the phosphatidylethanolamine-binding protein family.

The protein resides in the secreted. Promotes AKT phosphorylation, suggesting a possible role in the PI3K-AKT signaling pathway. This Homo sapiens (Human) protein is Phosphatidylethanolamine-binding protein 4 (PEBP4).